The primary structure comprises 391 residues: 3-ketoacyl-CoA thiolase (391 aa).

Residue Cys-95 is the Acyl-thioester intermediate of the active site. Catalysis depends on proton acceptor residues His-347 and Cys-377.

This sequence belongs to the thiolase-like superfamily. Thiolase family. In terms of assembly, heterotetramer of two alpha chains (FadB) and two beta chains (FadA).

It localises to the cytoplasm. It catalyses the reaction an acyl-CoA + acetyl-CoA = a 3-oxoacyl-CoA + CoA. It functions in the pathway lipid metabolism; fatty acid beta-oxidation. In terms of biological role, catalyzes the final step of fatty acid oxidation in which acetyl-CoA is released and the CoA ester of a fatty acid two carbons shorter is formed. In Vibrio parahaemolyticus serotype O3:K6 (strain RIMD 2210633), this protein is 3-ketoacyl-CoA thiolase.